A 366-amino-acid chain; its full sequence is N-acetyl-L-citrulline deacetylase (366 aa).

Positions 72 and 103 each coordinate Co(2+). Glu-130 serves as the catalytic Proton donor/acceptor. Position 155 (Glu-155) interacts with Co(2+).

It belongs to the peptidase M20A family. N-acetylcitrulline deacetylase subfamily. As to quaternary structure, forms homodimers in the crystal, but higher order oligomers may form in solution. The cofactor is Co(2+).

It carries out the reaction N(2)-acetyl-L-citrulline + H2O = L-citrulline + acetate. The catalysed reaction is N(2)-acetyl-L-ornithine + H2O = L-ornithine + acetate. The protein operates within amino-acid biosynthesis; L-arginine biosynthesis. Functionally, catalyzes the deacetylation of N-acetyl-L-citrulline to produce L-citrulline. This is a step in an alternative arginine biosynthesis pathway. Is also able to catalyze the deacetylation of N-acetylornithine in vitro, with almost equal velocity. However, this reaction may be not relevant in vivo since Xanthomonas does not possess the canonical argF gene and cannot convert ornithine to citrulline via ArgF'. This is N-acetyl-L-citrulline deacetylase from Xanthomonas campestris pv. campestris (strain ATCC 33913 / DSM 3586 / NCPPB 528 / LMG 568 / P 25).